The following is a 97-amino-acid chain: Citrate lyase acyl carrier protein (97 aa).

An O-(phosphoribosyl dephospho-coenzyme A)serine modification is found at Ser14.

It belongs to the CitD family. In terms of assembly, oligomer with a subunit composition of (alpha,beta,gamma)6.

Its subcellular location is the cytoplasm. Covalent carrier of the coenzyme of citrate lyase. The protein is Citrate lyase acyl carrier protein of Cronobacter sakazakii (strain ATCC BAA-894) (Enterobacter sakazakii).